The chain runs to 177 residues: ATP synthase subunit delta (177 aa).

Belongs to the ATPase delta chain family. In terms of assembly, F-type ATPases have 2 components, F(1) - the catalytic core - and F(0) - the membrane proton channel. F(1) has five subunits: alpha(3), beta(3), gamma(1), delta(1), epsilon(1). F(0) has three main subunits: a(1), b(2) and c(10-14). The alpha and beta chains form an alternating ring which encloses part of the gamma chain. F(1) is attached to F(0) by a central stalk formed by the gamma and epsilon chains, while a peripheral stalk is formed by the delta and b chains.

It localises to the cell inner membrane. Its function is as follows. F(1)F(0) ATP synthase produces ATP from ADP in the presence of a proton or sodium gradient. F-type ATPases consist of two structural domains, F(1) containing the extramembraneous catalytic core and F(0) containing the membrane proton channel, linked together by a central stalk and a peripheral stalk. During catalysis, ATP synthesis in the catalytic domain of F(1) is coupled via a rotary mechanism of the central stalk subunits to proton translocation. This protein is part of the stalk that links CF(0) to CF(1). It either transmits conformational changes from CF(0) to CF(1) or is implicated in proton conduction. This chain is ATP synthase subunit delta, found in Shewanella piezotolerans (strain WP3 / JCM 13877).